The following is a 498-amino-acid chain: O-methyltransferase OME1 (498 aa).

Residues 1–19 (MSTMALHRTASTKSDTTMA) show a composition bias toward polar residues. 2 disordered regions span residues 1–23 (MSTMALHRTASTKSDTTMACPNG) and 42–83 (HRAE…QPEY). The span at 50–65 (SSTSSVSTTPTSPSFS) shows a compositional bias: low complexity. Asp358 contributes to the S-adenosyl-L-methionine binding site. Residue His406 is the Proton acceptor of the active site.

This sequence belongs to the class I-like SAM-binding methyltransferase superfamily. Cation-independent O-methyltransferase family.

It functions in the pathway secondary metabolite biosynthesis. Functionally, O-methyltransferase; part of the gene cluster that mediates the biosynthesis of a tyrosine-derived cytochalasan acting as a fungal signal recognized by resistant rice plants and leads to avirulence in Pi33 resistant rice cultivars. The first step in the pathway is catalyzed by the hybrid PKS-NRPS ACE1, assisted by the enoyl reductase RAP1, that are responsible for fusion of the tyrosine precursor and the polyketide backbone. The polyketide synthase module (PKS) of ACE1 is responsible for the synthesis of the polyketide backbone and the downstream nonribosomal peptide synthetase (NRPS) amidates the carboxyl end of the polyketide with the tyrosine precursor. Because ACE1 lacks a designated enoylreductase (ER) domain, the required activity is provided the enoyl reductase RAP1. Reduction by the hydrolyase ORFZ, followed by dehydration and intra-molecular Diels-Alder cyclization by the Diels-Alderase ORF3 then yield the required isoindolone-fused macrocycle. A number of oxidative steps catalyzed by the tailoring enzymes identified within the cluster, including cytochrome P450 monooxygenases CYP1 to CYP4, the FAD-linked oxidoreductase OXR2 and the short-chain dehydrogenase/reductase OXR1, are further required to afford the final cytochalasans that confer avirulence and which have still to be identified. The monooxygenase CYP1 has been shown to be a site-selective C-18 hydroxylase whereas the function of CYP3 is the site-selective epoxidation of the C-6/C-7 olefin that is present in some intermediate compounds. Finally, SYN2 and RAP2 are not required for avirulence in Pi33 resistant rice cultivars. The chain is O-methyltransferase OME1 from Pyricularia oryzae (strain 70-15 / ATCC MYA-4617 / FGSC 8958) (Rice blast fungus).